Consider the following 537-residue polypeptide: MGCGLLAAGLLLFTWLPAGCLSLLVTVQHTERYVTLFASVTLKCDYTTSAQLQDVVVTWRFKSFCKDPIFDYFSASYQAALSLGQDPSNDCSDNQREVRIVAQRRGQSEPVLGVDYRQRKITIQNRADLVINEVMWWDHGVYYCTIEAPGDTSGDPDKEVKLIVLHWLTVIFIILGALLLLLLIGVCWCQCCPQYCCCYIRCPCCPTRCCCPEEALARHRYMKQVQALGPQMMEKPLYWGADRSSQVSSYAMNPLLQRDLSLQSSLPQMPMTQMAAHPPVANGVLEYLEKELRNLNPAQPLPADLRAKSGHPCSMLSSLGSAEVVERRVIHLPPLIRDPPSSRTSNPSHQQRLNAVSSRHCDLSERPRQRHHSDFLRELQDQGMRPWAPGRGELDPHWSGRHHRSRPSESSMPWSDWDSLSECPSSSEAPWPPRRPEPREGAQRRERRRHRSYSPPLPSGPSSWSSEEEKESLPRNWGAQRRHHHRRRRSQSPNWPEEKPPSYRSLDVTPGKNNRKKGNVERRLERESSHSGRSVVI.

Residues 1–22 (MGCGLLAAGLLLFTWLPAGCLS) form the signal peptide. An Ig-like V-type domain is found at 23–161 (LLVTVQHTER…TSGDPDKEVK (139 aa)). Residues 23 to 166 (LLVTVQHTER…DKEVKLIVLH (144 aa)) lie on the Extracellular side of the membrane. Cysteines 44 and 144 form a disulfide. Residues 167-187 (WLTVIFIILGALLLLLLIGVC) traverse the membrane as a helical segment. Residues 188–537 (WCQCCPQYCC…SSHSGRSVVI (350 aa)) are Cytoplasmic-facing. The tract at residues 333 to 537 (PPLIRDPPSS…SSHSGRSVVI (205 aa)) is disordered. Residues 341-357 (SSRTSNPSHQQRLNAVS) show a composition bias toward polar residues. Basic and acidic residues-rich tracts occupy residues 359–380 (RHCD…RELQ) and 434–444 (RRPEPREGAQR). Residues 480-490 (QRRHHHRRRRS) show a composition bias toward basic residues. Phosphoserine occurs at positions 490 and 492. Residues 518–530 (GNVERRLERESSH) show a composition bias toward basic and acidic residues.

Belongs to the immunoglobulin superfamily. LISCH7 family. Homooligomer. Interacts with MARVELD2 and OCLN; the interaction is required to recruit MARVELD2 to tricellular contacts. Interacts (via C-terminus) with TRA2A, TRA2B and SRSF1. Interacts with PLSCR1. As to expression, expressed in the vestibule and in hair cells and supporting cells of the cochlea. Expressed in epithelial tissues. Highly expressed in colon but also detected in small intestine, bladder and lung. In colon, expressed in the upper portion of the crypts (at protein level). Expressed in CCK secretory cells of the proximal small intestine (at protein level). Expressed in the organ of Corti, stria vascularis, utricle and saccule of the inner ear.

Its subcellular location is the cell membrane. The protein localises to the cell junction. It is found in the tight junction. The protein resides in the nucleus. It localises to the cytoplasm. Functionally, maintains epithelial barrier function by recruiting MARVELD2/tricellulin to tricellular tight junctions (tTJs). Crucial for normal hearing by maintaining the structural and functional integrity of tTJs, which are critical for the survival of auditory neurosensory HCs. Mediates fatty acids and lipoproteins-stimulated CCK/cholecystokinin secretion in the small intestine. In the inner ear, may regulate alternative pre-mRNA splicing via binding to TRA2A, TRA2B and SRSF1. This is Immunoglobulin-like domain-containing receptor 1 from Mus musculus (Mouse).